We begin with the raw amino-acid sequence, 373 residues long: Phosphoserine aminotransferase (373 aa).

R46 provides a ligand contact to L-glutamate. Residues F104, T150, D172, and Q195 each contribute to the pyridoxal 5'-phosphate site. Residue K196 is modified to N6-(pyridoxal phosphate)lysine. 247-248 (NT) provides a ligand contact to pyridoxal 5'-phosphate.

Belongs to the class-V pyridoxal-phosphate-dependent aminotransferase family. SerC subfamily. As to quaternary structure, homodimer. Pyridoxal 5'-phosphate is required as a cofactor.

It localises to the cytoplasm. It catalyses the reaction O-phospho-L-serine + 2-oxoglutarate = 3-phosphooxypyruvate + L-glutamate. The enzyme catalyses 4-(phosphooxy)-L-threonine + 2-oxoglutarate = (R)-3-hydroxy-2-oxo-4-phosphooxybutanoate + L-glutamate. It participates in amino-acid biosynthesis; L-serine biosynthesis; L-serine from 3-phospho-D-glycerate: step 2/3. It functions in the pathway cofactor biosynthesis; pyridoxine 5'-phosphate biosynthesis; pyridoxine 5'-phosphate from D-erythrose 4-phosphate: step 3/5. Its function is as follows. Catalyzes the reversible conversion of 3-phosphohydroxypyruvate to phosphoserine and of 3-hydroxy-2-oxo-4-phosphonooxybutanoate to phosphohydroxythreonine. The sequence is that of Phosphoserine aminotransferase from Rhodococcus jostii (strain RHA1).